A 71-amino-acid chain; its full sequence is Conotoxin LvVIIB (71 aa).

Residues 1 to 17 (VLIIAVLFLAASELVTA) form the signal peptide. Residues 18 to 42 (DYTRDEWQYRAASLRDAMRNFRDTR) constitute a propeptide that is removed on maturation. Disulfide bonds link C43–C57, C50–C62, and C56–C69.

This sequence belongs to the conotoxin O1 superfamily. Expressed by the venom duct.

The protein localises to the secreted. The protein is Conotoxin LvVIIB of Conus lividus (Livid cone).